Reading from the N-terminus, the 241-residue chain is Biosynthetic peptidoglycan transglycosylase (241 aa).

The chain crosses the membrane as a helical span at residues 19–39; that stretch reads AILAVLGVWIAGILLFSVMPV.

Belongs to the glycosyltransferase 51 family.

Its subcellular location is the cell inner membrane. It catalyses the reaction [GlcNAc-(1-&gt;4)-Mur2Ac(oyl-L-Ala-gamma-D-Glu-L-Lys-D-Ala-D-Ala)](n)-di-trans,octa-cis-undecaprenyl diphosphate + beta-D-GlcNAc-(1-&gt;4)-Mur2Ac(oyl-L-Ala-gamma-D-Glu-L-Lys-D-Ala-D-Ala)-di-trans,octa-cis-undecaprenyl diphosphate = [GlcNAc-(1-&gt;4)-Mur2Ac(oyl-L-Ala-gamma-D-Glu-L-Lys-D-Ala-D-Ala)](n+1)-di-trans,octa-cis-undecaprenyl diphosphate + di-trans,octa-cis-undecaprenyl diphosphate + H(+). It functions in the pathway cell wall biogenesis; peptidoglycan biosynthesis. In terms of biological role, peptidoglycan polymerase that catalyzes glycan chain elongation from lipid-linked precursors. This Cronobacter sakazakii (strain ATCC BAA-894) (Enterobacter sakazakii) protein is Biosynthetic peptidoglycan transglycosylase.